Consider the following 91-residue polypeptide: C-C motif chemokine 5 (91 aa).

Residues 1 to 23 form the signal peptide; sequence MKISAAALTIILTAAALCTPAPA. 2 cysteine pairs are disulfide-bonded: Cys-33–Cys-57 and Cys-34–Cys-73.

The protein belongs to the intercrine beta (chemokine CC) family. T-cell and macrophage specific.

The protein resides in the secreted. Its function is as follows. Chemoattractant for blood monocytes, memory T-helper cells and eosinophils. Causes the release of histamine from basophils and activates eosinophils. May activate several chemokine receptors including CCR1, CCR3, CCR4 and CCR5. May also be an agonist of the G protein-coupled receptor GPR75. Together with GPR75, may play a role in neuron survival through activation of a downstream signaling pathway involving the PI3, Akt and MAP kinases. By activating GPR75 may also play a role in insulin secretion by islet cells. This Mus musculus (Mouse) protein is C-C motif chemokine 5 (Ccl5).